Consider the following 445-residue polypeptide: Phosphoglucosamine mutase (445 aa).

Catalysis depends on S102, which acts as the Phosphoserine intermediate. Mg(2+) contacts are provided by S102, D241, D243, and D245. Position 102 is a phosphoserine (S102).

It belongs to the phosphohexose mutase family. The cofactor is Mg(2+). Activated by phosphorylation.

It catalyses the reaction alpha-D-glucosamine 1-phosphate = D-glucosamine 6-phosphate. Functionally, catalyzes the conversion of glucosamine-6-phosphate to glucosamine-1-phosphate. The polypeptide is Phosphoglucosamine mutase (Novosphingobium aromaticivorans (strain ATCC 700278 / DSM 12444 / CCUG 56034 / CIP 105152 / NBRC 16084 / F199)).